The following is a 208-amino-acid chain: Large ribosomal subunit protein uL4 (208 aa).

The protein belongs to the universal ribosomal protein uL4 family. Part of the 50S ribosomal subunit.

Its function is as follows. One of the primary rRNA binding proteins, this protein initially binds near the 5'-end of the 23S rRNA. It is important during the early stages of 50S assembly. It makes multiple contacts with different domains of the 23S rRNA in the assembled 50S subunit and ribosome. Forms part of the polypeptide exit tunnel. The protein is Large ribosomal subunit protein uL4 of Solibacter usitatus (strain Ellin6076).